The following is a 633-amino-acid chain: Glutamyl-tRNA(Gln) amidotransferase subunit E (633 aa).

It belongs to the GatB/GatE family. GatE subfamily. In terms of assembly, heterodimer of GatD and GatE.

It carries out the reaction L-glutamyl-tRNA(Gln) + L-glutamine + ATP + H2O = L-glutaminyl-tRNA(Gln) + L-glutamate + ADP + phosphate + H(+). Allows the formation of correctly charged Gln-tRNA(Gln) through the transamidation of misacylated Glu-tRNA(Gln) in organisms which lack glutaminyl-tRNA synthetase. The reaction takes place in the presence of glutamine and ATP through an activated gamma-phospho-Glu-tRNA(Gln). The GatDE system is specific for glutamate and does not act on aspartate. The protein is Glutamyl-tRNA(Gln) amidotransferase subunit E of Methanococcus vannielii (strain ATCC 35089 / DSM 1224 / JCM 13029 / OCM 148 / SB).